The sequence spans 3187 residues: Cilia- and flagella-associated protein 47 (3187 aa).

The region spanning 1746–1869 (SDSERILLSW…LCVYMYERLP (124 aa)) is the Calponin-homology (CH) domain. The interval 2024–2052 (KLTESRQYPKHDDDMSSSGSDTDQGCSDS) is disordered. The span at 2026–2037 (TESRQYPKHDDD) shows a compositional bias: basic and acidic residues.

In terms of assembly, interacts with CFAP65. Highly expressed in spermatzoa (at protein level).

The protein resides in the cytoplasm. Its subcellular location is the cytoskeleton. It is found in the flagellum basal body. In terms of biological role, plays a role in flagellar formation and sperm motility. This is Cilia- and flagella-associated protein 47 from Homo sapiens (Human).